The primary structure comprises 220 residues: Ribosomal RNA small subunit methyltransferase G 1 (220 aa).

The S-adenosyl-L-methionine site is built by glycine 79, phenylalanine 84, and arginine 150.

It belongs to the methyltransferase superfamily. RNA methyltransferase RsmG family.

The protein resides in the cytoplasm. The enzyme catalyses guanosine(527) in 16S rRNA + S-adenosyl-L-methionine = N(7)-methylguanosine(527) in 16S rRNA + S-adenosyl-L-homocysteine. Functionally, specifically methylates the N7 position of guanine in position 527 of 16S rRNA. In Syntrophobacter fumaroxidans (strain DSM 10017 / MPOB), this protein is Ribosomal RNA small subunit methyltransferase G 1.